The sequence spans 159 residues: Urease accessory protein UreE (159 aa).

The protein belongs to the UreE family.

Its subcellular location is the cytoplasm. In terms of biological role, involved in urease metallocenter assembly. Binds nickel. Probably functions as a nickel donor during metallocenter assembly. The chain is Urease accessory protein UreE from Vibrio parahaemolyticus.